The chain runs to 315 residues: Acetyl-coenzyme A carboxylase carboxyl transferase subunit alpha (315 aa).

Positions 40–293 constitute a CoA carboxyltransferase C-terminal domain; that stretch reads LEDKKIALTK…KKNVLAALDR (254 aa).

Belongs to the AccA family. In terms of assembly, acetyl-CoA carboxylase is a heterohexamer composed of biotin carboxyl carrier protein (AccB), biotin carboxylase (AccC) and two subunits each of ACCase subunit alpha (AccA) and ACCase subunit beta (AccD).

It is found in the cytoplasm. It carries out the reaction N(6)-carboxybiotinyl-L-lysyl-[protein] + acetyl-CoA = N(6)-biotinyl-L-lysyl-[protein] + malonyl-CoA. Its pathway is lipid metabolism; malonyl-CoA biosynthesis; malonyl-CoA from acetyl-CoA: step 1/1. In terms of biological role, component of the acetyl coenzyme A carboxylase (ACC) complex. First, biotin carboxylase catalyzes the carboxylation of biotin on its carrier protein (BCCP) and then the CO(2) group is transferred by the carboxyltransferase to acetyl-CoA to form malonyl-CoA. The chain is Acetyl-coenzyme A carboxylase carboxyl transferase subunit alpha from Marinomonas sp. (strain MWYL1).